The primary structure comprises 281 residues: Phosphonates import ATP-binding protein PhnC (281 aa).

Residues 5–253 form the ABC transporter domain; sequence IEVCGLTKSF…MLRDLYGTEA (249 aa). An ATP-binding site is contributed by 38-45; sequence GASGSGKS.

This sequence belongs to the ABC transporter superfamily. Phosphonates importer (TC 3.A.1.9.1) family. As to quaternary structure, the complex is composed of two ATP-binding proteins (PhnC), two transmembrane proteins (PhnE) and a solute-binding protein (PhnD).

It localises to the cell inner membrane. The catalysed reaction is phosphonate(out) + ATP + H2O = phosphonate(in) + ADP + phosphate + H(+). Part of the ABC transporter complex PhnCDE involved in phosphonates import. Responsible for energy coupling to the transport system. The polypeptide is Phosphonates import ATP-binding protein PhnC (Cupriavidus pinatubonensis (strain JMP 134 / LMG 1197) (Cupriavidus necator (strain JMP 134))).